The primary structure comprises 290 residues: 4-diphosphocytidyl-2-C-methyl-D-erythritol kinase (290 aa).

K8 is a catalytic residue. 89 to 99 is a binding site for ATP; the sequence is PIGAGVGGGSS. D131 is a catalytic residue.

The protein belongs to the GHMP kinase family. IspE subfamily.

It carries out the reaction 4-CDP-2-C-methyl-D-erythritol + ATP = 4-CDP-2-C-methyl-D-erythritol 2-phosphate + ADP + H(+). It participates in isoprenoid biosynthesis; isopentenyl diphosphate biosynthesis via DXP pathway; isopentenyl diphosphate from 1-deoxy-D-xylulose 5-phosphate: step 3/6. In terms of biological role, catalyzes the phosphorylation of the position 2 hydroxy group of 4-diphosphocytidyl-2C-methyl-D-erythritol. In Chlamydia felis (strain Fe/C-56) (Chlamydophila felis), this protein is 4-diphosphocytidyl-2-C-methyl-D-erythritol kinase.